Consider the following 383-residue polypeptide: Putative F-box/kelch-repeat protein At1g62270 (383 aa).

Residues 6–51 form the F-box domain; it reads TSSFSSLPWDLVEDILARVPATSLKRLRSTCKQWNFLFNDQIFTKM. 3 Kelch repeats span residues 110–158, 160–211, and 349–383; these read KVFH…YGNY, SCYN…LRGN, and TVYI…LVQI.

The protein is Putative F-box/kelch-repeat protein At1g62270 of Arabidopsis thaliana (Mouse-ear cress).